The chain runs to 118 residues: UPF0329 protein ECU03_0030/ECU05_0040/ECU06_0010/ECU06_1710/ECU11_0010 (118 aa).

It belongs to the UPF0329 family.

The polypeptide is UPF0329 protein ECU03_0030/ECU05_0040/ECU06_0010/ECU06_1710/ECU11_0010 (Encephalitozoon cuniculi (strain GB-M1) (Microsporidian parasite)).